Here is a 217-residue protein sequence, read N- to C-terminus: ATP phosphoribosyltransferase (217 aa).

This sequence belongs to the ATP phosphoribosyltransferase family. Short subfamily. Heteromultimer composed of HisG and HisZ subunits.

Its subcellular location is the cytoplasm. The enzyme catalyses 1-(5-phospho-beta-D-ribosyl)-ATP + diphosphate = 5-phospho-alpha-D-ribose 1-diphosphate + ATP. It functions in the pathway amino-acid biosynthesis; L-histidine biosynthesis; L-histidine from 5-phospho-alpha-D-ribose 1-diphosphate: step 1/9. Its function is as follows. Catalyzes the condensation of ATP and 5-phosphoribose 1-diphosphate to form N'-(5'-phosphoribosyl)-ATP (PR-ATP). Has a crucial role in the pathway because the rate of histidine biosynthesis seems to be controlled primarily by regulation of HisG enzymatic activity. This is ATP phosphoribosyltransferase from Prochlorococcus marinus (strain MIT 9313).